Reading from the N-terminus, the 263-residue chain is LOB domain-containing protein 41 (263 aa).

Residues 3–109 enclose the LOB domain; the sequence is MSCNGCRVLR…VEAVMKGEPV (107 aa). Positions 162–204 are disordered; the sequence is TVAIQAESEGKSDEASHDSSLSHQSEIVAAHEGESKESESNVS. Basic and acidic residues-rich tracts occupy residues 169-178 and 190-200; these read SEGKSDEASH and AAHEGESKESE.

This sequence belongs to the LOB domain-containing protein family. In terms of tissue distribution, expressed in young shoots, roots, stems, leaves and flowers.

This is LOB domain-containing protein 41 (LBD41) from Arabidopsis thaliana (Mouse-ear cress).